The primary structure comprises 334 residues: Probable GTP 3',8-cyclase (334 aa).

Positions 24–256 (PYGRKVTGLR…RKKYMIDGVE (233 aa)) constitute a Radical SAM core domain. R33 is a binding site for GTP. [4Fe-4S] cluster contacts are provided by C40 and C44. Residue Y46 participates in S-adenosyl-L-methionine binding. Residue C47 coordinates [4Fe-4S] cluster. K85 contributes to the GTP binding site. Position 89 (G89) interacts with S-adenosyl-L-methionine. Residue T113 participates in GTP binding. An S-adenosyl-L-methionine-binding site is contributed by S137. K176 contacts GTP. Residues C269 and C272 each contribute to the [4Fe-4S] cluster site. A GTP-binding site is contributed by 274–276 (RLR). C286 is a [4Fe-4S] cluster binding site.

Belongs to the radical SAM superfamily. MoaA family. [4Fe-4S] cluster serves as cofactor.

The enzyme catalyses GTP + AH2 + S-adenosyl-L-methionine = (8S)-3',8-cyclo-7,8-dihydroguanosine 5'-triphosphate + 5'-deoxyadenosine + L-methionine + A + H(+). It participates in cofactor biosynthesis; molybdopterin biosynthesis. Catalyzes the cyclization of GTP to (8S)-3',8-cyclo-7,8-dihydroguanosine 5'-triphosphate. The protein is Probable GTP 3',8-cyclase of Methanosarcina mazei (strain ATCC BAA-159 / DSM 3647 / Goe1 / Go1 / JCM 11833 / OCM 88) (Methanosarcina frisia).